Consider the following 487-residue polypeptide: WRKY transcription factor 1 (487 aa).

Residues 69 to 104 (QSEVDVASPVSEKAPKVSESSGALSLQSGSEGNSPF) form a disordered region. Serine 76 carries the post-translational modification Phosphoserine. Residues 86-101 (SESSGALSLQSGSEGN) show a composition bias toward polar residues. The WRKY 1 DNA-binding region spans 105 to 169 (IREKVMEDGY…YFGEHDHPKP (65 aa)). Residues cysteine 136, cysteine 141, histidine 164, and histidine 166 each contribute to the Zn(2+) site. The tract at residues 255–287 (SSRITGDNTHKDYNSPTAKRRKKGGNIELSPVE) is disordered. The short motif at 273–277 (KRRKK) is the Nuclear localization signal element. The WRKY 2 DNA-binding region spans 301–366 (TLFDIVNDGY…YEGKHDHDMP (66 aa)). The Zn(2+) site is built by cysteine 332, cysteine 337, histidine 361, and histidine 363. The interval 380–487 (EVDDKEGDAN…QKPKTEPAQS (108 aa)) is disordered. The segment covering 390–401 (KTPQSSTLQSIT) has biased composition (polar residues). 2 stretches are compositionally biased toward basic and acidic residues: residues 429–462 (LDEK…DDKT) and 476–487 (EEQKPKTEPAQS).

The protein belongs to the WRKY group I family. Expressed to similar levels in root and flower, to a somewhat lower level in stem and to low levels in leaf and siliques.

Its subcellular location is the nucleus. Transcription factor. Binds to a 5'-CGTTGACCGAG-3' consensus core sequence which contains a W box, a frequently occurring elicitor-responsive cis-acting element. This chain is WRKY transcription factor 1, found in Arabidopsis thaliana (Mouse-ear cress).